We begin with the raw amino-acid sequence, 206 residues long: Large ribosomal subunit protein uL4 (206 aa).

This sequence belongs to the universal ribosomal protein uL4 family. As to quaternary structure, part of the 50S ribosomal subunit.

In terms of biological role, one of the primary rRNA binding proteins, this protein initially binds near the 5'-end of the 23S rRNA. It is important during the early stages of 50S assembly. It makes multiple contacts with different domains of the 23S rRNA in the assembled 50S subunit and ribosome. Functionally, forms part of the polypeptide exit tunnel. The protein is Large ribosomal subunit protein uL4 of Methylorubrum populi (strain ATCC BAA-705 / NCIMB 13946 / BJ001) (Methylobacterium populi).